A 531-amino-acid polypeptide reads, in one-letter code: NADH-quinone oxidoreductase subunit N (531 aa).

14 helical membrane-spanning segments follow: residues 8 to 28 (VEYF…AGVL), 41 to 61 (AQVT…IVVA), 81 to 101 (ATLF…VFMA), 146 to 166 (GATQ…MMVF), 172 to 192 (LLTM…MCGL), 208 to 228 (FLLG…LYGA), 250 to 270 (ALAG…AVPF), 282 to 302 (PTPI…GALL), 318 to 338 (PVLW…AVNQ), 350 to 370 (VAHV…GLSA), 372 to 392 (LFYL…VGLV), 418 to 438 (IVGV…LTSG), 453 to 473 (GAVP…YFYV), and 500 to 520 (AAIA…QPVL).

This sequence belongs to the complex I subunit 2 family. In terms of assembly, NDH-1 is composed of 14 different subunits. Subunits NuoA, H, J, K, L, M, N constitute the membrane sector of the complex.

It is found in the cell membrane. It catalyses the reaction a quinone + NADH + 5 H(+)(in) = a quinol + NAD(+) + 4 H(+)(out). In terms of biological role, NDH-1 shuttles electrons from NADH, via FMN and iron-sulfur (Fe-S) centers, to quinones in the respiratory chain. The immediate electron acceptor for the enzyme in this species is believed to be a menaquinone. Couples the redox reaction to proton translocation (for every two electrons transferred, four hydrogen ions are translocated across the cytoplasmic membrane), and thus conserves the redox energy in a proton gradient. This is NADH-quinone oxidoreductase subunit N from Mycobacterium tuberculosis (strain CDC 1551 / Oshkosh).